We begin with the raw amino-acid sequence, 547 residues long: Chaperonin GroEL (547 aa).

ATP-binding positions include 30–33 (TLGP), Lys51, 87–91 (DGTTT), Gly415, 478–480 (NAA), and Asp494.

The protein belongs to the chaperonin (HSP60) family. As to quaternary structure, forms a cylinder of 14 subunits composed of two heptameric rings stacked back-to-back. Interacts with the co-chaperonin GroES.

It is found in the cytoplasm. It catalyses the reaction ATP + H2O + a folded polypeptide = ADP + phosphate + an unfolded polypeptide.. Its function is as follows. Together with its co-chaperonin GroES, plays an essential role in assisting protein folding. The GroEL-GroES system forms a nano-cage that allows encapsulation of the non-native substrate proteins and provides a physical environment optimized to promote and accelerate protein folding. In Geobacter sp. (strain M21), this protein is Chaperonin GroEL.